The following is a 514-amino-acid chain: MTTTKRPIALLILDGWGYRENTHMNAIFHAKTPVLDRLNAQYPHGLISGSGLDVGLPDGQMGNSEVGHINLGSGRIVYQELTRISKAISDHEFETNPALCDAVDSAINAGGAVHIMGLLSPGGVHSHEEHIEAMCRMAVARGATKVYLHAFLDGRDTPPRSAKASLSHFDDLFTTLGHGRVASIIGRYFAMDRDNRWDRVSQAYELITQGKAKFQYDNAVTALEAAYARDENDEFVSSSAITDVDGKVATLQDGDALIFMNFRADRARQITRSFIHPDFDGFERAVVPKMHFVTLTEYAGDITAPIAYPSENLVNTLGEVLQNRGRTQLRISETEKYAHVTFFFNGGKEEPFEGEDRILINSPKVATYDLQPEMSSTELTDKLVAAIESTKYDVIICNYPNGDMVGHTGNFDAAVKACEAVDTCIGRVVEALAKVGGECIITADHGNAEQMTDETTGQAHTAHTSELVPFIFVGRDATIDKGGKLSDVAPTILQLIGETIPAEMKGKPLIHIKE.

The Mn(2+) site is built by aspartate 14 and serine 64. The active-site Phosphoserine intermediate is serine 64. Substrate-binding positions include histidine 125, 155-156, arginine 187, arginine 193, 263-266, and lysine 336; these read RD and RADR. 5 residues coordinate Mn(2+): aspartate 403, histidine 407, aspartate 444, histidine 445, and histidine 463.

Belongs to the BPG-independent phosphoglycerate mutase family. As to quaternary structure, monomer. Requires Mn(2+) as cofactor.

It carries out the reaction (2R)-2-phosphoglycerate = (2R)-3-phosphoglycerate. The protein operates within carbohydrate degradation; glycolysis; pyruvate from D-glyceraldehyde 3-phosphate: step 3/5. In terms of biological role, catalyzes the interconversion of 2-phosphoglycerate and 3-phosphoglycerate. The chain is 2,3-bisphosphoglycerate-independent phosphoglycerate mutase from Shewanella sp. (strain W3-18-1).